Reading from the N-terminus, the 855-residue chain is MNKRDFSELKNSESSEESSLVSSTETVRSSKRNKKFHKNNRQSNSFIISLNFTIRNDDDPFVYMKNPLSEFIKIGNFVYKTKSFVSLDKDYHDDNLDWKISLNRSQYDDVKDFIYDKNRVIVSSFTNEIQSSCFIKVELSTSTHYKFRVTKNELINYIVRTLNGHIVTIDQNIDIHYMGYPMTINIVNIGDDFIGKITGSTDVHFKNIDSNIVVMNQCIDISNKDVSVFLTKCISLNSNHDNNIRFPIIIDKKIINRYVKNTFDDTFTDNDYRTYTCDDIEYTFNIKVIGCNTQTKFKNTYKLLDDSSPIQIKSNTDNVILTSGKKKAKKICFYFQSSNKDSPSDNILFYNDLVDFITSKYNKITCNQSVKYLTGSKEIVLKADFISPHINDNTMYIIDSNTKISFNTDIKSSYFIAHNDKPTEIDTVTFKIKNNASGGLFSLMFGDDDSEKTVIFDSGKLEKTVRSKFPKRTVLKHKASIQYNGVTYQFVVQEIKFKEDSDNKSDNKSDNKSKNHLDKIKKKYTTYGIITSNTNIKFVPAKANKSYVINNSVEQTEISKNPVQELEKYVGGISKELETVVRTLCLSRGILKQEYLARGLRPVKGIILHGPPGTGKTSLSRNLGKILGCEGDRFRLMSGPEIFNKWVGGSESNIRAIFKPAKDAWKKHGDKSPVYMVVIDEIDAMLPSRSGSDGNPVRDSVVNQFLAEMDGLEVFNNLICIGITNRLELLDPATIRSGRFGIHIKIDLPDQEGRVKIFQIHTKKLQELNRLSDDVDISKLAVITEEFSGADIEGMVELASVYSLERLNKLDVINDDVINTHGLVTFEDFTKAAKEINHNKNKSDSTKDNINHMYL.

The span at 1–13 shows a compositional bias: basic and acidic residues; the sequence is MNKRDFSELKNSE. The tract at residues 1 to 37 is disordered; that stretch reads MNKRDFSELKNSESSEESSLVSSTETVRSSKRNKKFH. The span at 17-27 shows a compositional bias: low complexity; sequence ESSLVSSTETV. 610–617 serves as a coordination point for ATP; it reads GPPGTGKT.

This sequence belongs to the AAA ATPase family.

The sequence is that of Putative AAA family ATPase R476 from Acanthamoeba polyphaga mimivirus (APMV).